The chain runs to 95 residues: Large ribosomal subunit protein bL27 (95 aa).

Positions 1 to 12 are excised as a propeptide; the sequence is MLLIKKINLQFF. Residues 17-37 form a disordered region; sequence GVGSTKNGRDSNPKYLGAKKS.

It belongs to the bacterial ribosomal protein bL27 family. The N-terminus is cleaved by ribosomal processing cysteine protease Prp.

The chain is Large ribosomal subunit protein bL27 from Malacoplasma penetrans (strain HF-2) (Mycoplasma penetrans).